The following is a 101-amino-acid chain: Small ribosomal subunit protein uS14A (101 aa).

A disordered region spans residues 31–59 (IRSPASSPEQRVAAQSELNRQPRDASAVR).

The protein belongs to the universal ribosomal protein uS14 family. Part of the 30S ribosomal subunit. Contacts proteins S3 and S10.

Binds 16S rRNA, required for the assembly of 30S particles and may also be responsible for determining the conformation of the 16S rRNA at the A site. The sequence is that of Small ribosomal subunit protein uS14A from Mycobacteroides abscessus (strain ATCC 19977 / DSM 44196 / CCUG 20993 / CIP 104536 / JCM 13569 / NCTC 13031 / TMC 1543 / L948) (Mycobacterium abscessus).